We begin with the raw amino-acid sequence, 512 residues long: MHAKRPSVLFFTISDFGYVNVVLATIYELLLRDEVDIHIASFAPLKPRLESLVQLVKHETKKSTDSSPGVHFHNLADFPGFATWAAQSKDRKKADVPHPPGRNGAGRVALLTLKALAIMEPEQYLSLFDWSADLTRKLNPALVMVDPILLPCHDMARTLGRKYAVLHPWSVADGLIPRQGWWSEYWKYPAFSTGFPYPLPWGKIPENISCYLTSKQCHSHPKVQALNQARYSHGIKPDPLGSFTPFAEGVPQITPSLPAVDLPMGNIPKNVFDCGPILVASPPIETSDPDLLSWLRRAPTVLVSLGTHFEAYAETVREQAIGIRILLEARPDVQVLWKLKREATSEKSGQENLESILGQAIQDGRVRTESWLKADPVAILRSGHIVCSVHHGGANSYFEATWAGVPQIVLAMWYDTFDYATRVEYLGIGAYGNREKGRSCVVDEDNYVAPNLVDGEEFGAALLRVVGRNRADPGAAQITKSAVILGEVCRRSGGRVRSAEIVTGLCFGKLDY.

The first 24 residues, 1–24 (MHAKRPSVLFFTISDFGYVNVVLA), serve as a signal peptide directing secretion. A glycan (N-linked (GlcNAc...) asparagine) is linked at Asn-207.

This sequence belongs to the UDP-glycosyltransferase family.

It carries out the reaction sordaricin + GDP-6-deoxy-alpha-D-altrose = 4'-O-demethylsordarin + GDP + H(+). The protein operates within antibiotic biosynthesis. Glycosyltransferase; part of the gene cluster that mediates the biosynthesis of sordarin and hypoxysordarin, glycoside antibiotics with a unique tetracyclic diterpene aglycone structure. First, the geranylgeranyl diphosphate synthase sdnC constructs GGDP from farnesyl diphosphate and isopentenyl diphosphate. The diterpene cyclase sdnA then catalyzes the cyclization of GGDP to afford cycloaraneosene. Cycloaraneosene is then hydroxylated four times by the putative cytochrome P450 monooxygenases sdnB, sdnE, sdnF and sdnH to give a hydroxylated cycloaraneosene derivative such as cycloaraneosene-8,9,13,19-tetraol. Although the order of the hydroxylations is unclear, at least C8, C9 and C13 of the cycloaraneosene skeleton are hydroxylated before the sordaricin formation. Dehydration of the 13-hydroxy group of the hydroxylated cycloaraneosene derivative might be catalyzed by an unassigned hypothetical protein such as sdnG and sdnP to construct the cyclopentadiene moiety. The FAD-dependent oxidoreductase sdnN is proposed to catalyze the oxidation at C9 of the hydroxylated cycloaraneosene derivative and also catalyze the Baeyer-Villiger oxidation to give the lactone intermediate. The presumed lactone intermediate would be hydrolyzed to give an acrolein moiety and a carboxylate moiety. Then, [4+2]cycloaddition would occur between the acrolein moiety and the cyclopentadiene moiety to give sordaricin. SdnN might also be involved in the [4+2]cycloaddition after the hypothesized oxidation to accommodate the oxidized product and prompt the [4+2]cycloaddition. GDP-6-deoxy-D-altrose may be biosynthesized from GDP-D-mannose by the putative GDP-mannose-4,6-dehydratase sdnI and the short-chain dehydrogenase sdnK. The glycosyltransferase sdnJ catalyzes the attachment of 6-deoxy-D-altrose onto the 19-hydroxy group of sordaricin to give 4'-O-demethylsordarin. The methyltransferase sdnD would complete the biosynthesis of sordarin. Sordarin can be further modified into hypoxysordarin. The unique acyl chain at the 3'-hydroxy group of hypoxysordarin would be constructed by an iterative type I PKS sdnO and the trans-acting polyketide methyltransferase sdnL. SdnL would be responsible for the introduction of an alpha-methyl group of the polyketide chain. Alternatively, the beta-lactamase-like protein sdnR might be responsible for the cleavage and transfer of the polyketide chain from the PKS sdnO to sordarin. Two putative cytochrome P450 monooxygenases, sdnQ and sdnT, might catalyze the epoxidations of the polyketide chain to complete the biosynthesis of hypoxysordarin. Transcriptional regulators sdnM and sdnS are presumably encoded for the transcriptional regulation of the expression of the sdn gene cluster. The protein is Glycosyltransferase sdnJ of Sordaria araneosa (Pleurage araneosa).